Reading from the N-terminus, the 303-residue chain is Epimerase family protein YfhF (303 aa).

The protein belongs to the NAD(P)-dependent epimerase/dehydratase family. SDR39U1 subfamily.

The polypeptide is Epimerase family protein YfhF (yfhF) (Bacillus subtilis (strain 168)).